A 193-amino-acid polypeptide reads, in one-letter code: dCTP deaminase (193 aa).

Residues 110-115 (RSSLAR), D128, 136-138 (VLE), Y171, K178, and Q182 contribute to the dCTP site. E138 serves as the catalytic Proton donor/acceptor.

The protein belongs to the dCTP deaminase family. As to quaternary structure, homotrimer.

It catalyses the reaction dCTP + H2O + H(+) = dUTP + NH4(+). It functions in the pathway pyrimidine metabolism; dUMP biosynthesis; dUMP from dCTP (dUTP route): step 1/2. Its function is as follows. Catalyzes the deamination of dCTP to dUTP. In Buchnera aphidicola subsp. Acyrthosiphon pisum (strain APS) (Acyrthosiphon pisum symbiotic bacterium), this protein is dCTP deaminase.